Reading from the N-terminus, the 58-residue chain is U11-myrmicitoxin-Tb1a (58 aa).

A propeptide spanning residues 1-24 (LAMAMGDAVADAQARAMAAAYAIA) is cleaved from the precursor. C34 and C57 are joined by a disulfide.

It belongs to the formicidae venom precursor-01 superfamily. Expressed by the venom gland.

Its subcellular location is the secreted. It is found in the target cell membrane. Neurotoxin that causes irreversible rapid flaccid paralysis in blowflies and honeybees upon intrathoracic injection. Causes a quick and irreversible cytolytic effect (at 10 uM) indicating it possibly acts as a pore-forming peptide. Shows only weak effect on aphids (A.pisum) at high doses 24 hours post intrathoracic injection. In vitro, is not cytotoxic on the dipteran S2 Drosophila embryonic cell line. The sequence is that of U11-myrmicitoxin-Tb1a from Tetramorium bicarinatum (Tramp ant).